The sequence spans 192 residues: Transcription termination/antitermination protein NusG (192 aa).

In terms of domain architecture, KOW spans 140–168; the sequence is VGEVVTVTDGPFETFMGTVEEIDKERNRL.

The protein belongs to the NusG family.

Functionally, participates in transcription elongation, termination and antitermination. The polypeptide is Transcription termination/antitermination protein NusG (Rickettsia typhi (strain ATCC VR-144 / Wilmington)).